Here is a 374-residue protein sequence, read N- to C-terminus: Eukaryotic translation initiation factor 3 subunit M (374 aa).

Residues 180–339 (TAAKVMVELL…RKVVVSHSTH (160 aa)) form the PCI domain.

The protein belongs to the eIF-3 subunit M family. Component of the eukaryotic translation initiation factor 3 (eIF-3) complex, which is composed of 13 subunits: EIF3A, EIF3B, EIF3C, EIF3D, EIF3E, EIF3F, EIF3G, EIF3H, EIF3I, EIF3J, EIF3K, EIF3L and EIF3M.

The protein localises to the cytoplasm. Functionally, component of the eukaryotic translation initiation factor 3 (eIF-3) complex, which is involved in protein synthesis of a specialized repertoire of mRNAs and, together with other initiation factors, stimulates binding of mRNA and methionyl-tRNAi to the 40S ribosome. The eIF-3 complex specifically targets and initiates translation of a subset of mRNAs involved in cell proliferation. This chain is Eukaryotic translation initiation factor 3 subunit M, found in Gallus gallus (Chicken).